Consider the following 1055-residue polypeptide: Leukotoxin (1055 aa).

Residues 11–49 (QQAAQFANSVADRAKENIDAAKEQLQKALDKLGKTGKKL) are a coiled coil. Cholesterol recognition/amino acid consensus (CRAC) region regions lie at residues 334 to 340 (LEEYSKR) and 502 to 506 (VDYLK). Hemolysin-type calcium-binding repeat units lie at residues 721–738 (IGST…NDVF), 739–756 (HGHD…DDRL), 757–774 (YGDN…NDKL), 775–792 (YGGA…NNYL), 793–810 (DGGE…SDIL), 811–828 (RGGS…DDLL), and 829–846 (DGGE…NDIY). Positions 795 to 815 (GEGDDHLEGGNGSDILRGGSG) are disordered. Residues 990–1009 (KGKSSSLMSSSRSSSMLTQK) are disordered. Residues 993–1006 (SSSLMSSSRSSSML) show a composition bias toward low complexity.

This sequence belongs to the RTX prokaryotic toxin (TC 1.C.11) family. Interacts specifically with the superoxide dismutase [Cu-Zn]. This interaction may protect LtxA from reactive oxygen species and reactive nitrogen species produced by host inflammatory cells during disease. Interacts with the human leukocyte adhesion glycoprotein LFA-1 (ITGAL-ITGB2). In terms of processing, acylated at Lys-562 and Lys-687 by LtxC. This modification is required for full activity. Isolated methyl esters contain palmitoyl and palmitolyl fatty acyl groups with smaller quantities of myristic and stearic fatty acids.

Its subcellular location is the cell outer membrane. The protein localises to the secreted. Virulence factor that plays an important role in immune evasion. Lyses human lymphocytes and monocytes. Binds to the LFA-1 integrin on the surface of the host cell and to cholesterol-containing membranes, which probably results in large LtxA-LFA-1 clusters in lipid rafts. Also shows beta-hemolytic activity on certain types of growth media. This Aggregatibacter actinomycetemcomitans (Actinobacillus actinomycetemcomitans) protein is Leukotoxin.